The following is a 121-amino-acid chain: MSRIKRGTTTRAKHKRILDQAKGYYGRRKNTIRIARQAVEKAGQYAYRDRKVKKRSFRALWIQRINAAVRAEGLTYSQFMHGVKLAGIELDRKVMADLAMNEGGVFTAIVAQAKAALPKAA.

The protein belongs to the bacterial ribosomal protein bL20 family.

Functionally, binds directly to 23S ribosomal RNA and is necessary for the in vitro assembly process of the 50S ribosomal subunit. It is not involved in the protein synthesizing functions of that subunit. This Sphingopyxis alaskensis (strain DSM 13593 / LMG 18877 / RB2256) (Sphingomonas alaskensis) protein is Large ribosomal subunit protein bL20.